A 120-amino-acid chain; its full sequence is Large ribosomal subunit protein uL22 (120 aa).

The segment at 1-20 (MFVNRRYTARGKNLPSSPKK) is disordered.

It belongs to the universal ribosomal protein uL22 family. In terms of assembly, part of the 50S ribosomal subunit.

This protein binds specifically to 23S rRNA; its binding is stimulated by other ribosomal proteins, e.g. L4, L17, and L20. It is important during the early stages of 50S assembly. It makes multiple contacts with different domains of the 23S rRNA in the assembled 50S subunit and ribosome. Functionally, the globular domain of the protein is located near the polypeptide exit tunnel on the outside of the subunit, while an extended beta-hairpin is found that lines the wall of the exit tunnel in the center of the 70S ribosome. The protein is Large ribosomal subunit protein uL22 of Borrelia hermsii (strain HS1 / DAH).